The chain runs to 204 residues: ATP-dependent Clp protease proteolytic subunit (204 aa).

Residue serine 101 is the Nucleophile of the active site. The active site involves histidine 126.

The protein belongs to the peptidase S14 family. As to quaternary structure, component of the chloroplastic Clp protease core complex.

The protein localises to the plastid. It is found in the chloroplast stroma. The enzyme catalyses Hydrolysis of proteins to small peptides in the presence of ATP and magnesium. alpha-casein is the usual test substrate. In the absence of ATP, only oligopeptides shorter than five residues are hydrolyzed (such as succinyl-Leu-Tyr-|-NHMec, and Leu-Tyr-Leu-|-Tyr-Trp, in which cleavage of the -Tyr-|-Leu- and -Tyr-|-Trp bonds also occurs).. Functionally, cleaves peptides in various proteins in a process that requires ATP hydrolysis. Has a chymotrypsin-like activity. Plays a major role in the degradation of misfolded proteins. This chain is ATP-dependent Clp protease proteolytic subunit, found in Anthoceros angustus (Hornwort).